The chain runs to 234 residues: Glucosamine-6-phosphate deaminase (234 aa).

Asp62 acts as the Proton acceptor; for enolization step in catalysis. Catalysis depends on Asn128, which acts as the For ring-opening step. His130 functions as the Proton acceptor; for ring-opening step in the catalytic mechanism. Glu135 serves as the catalytic For ring-opening step.

The protein belongs to the glucosamine/galactosamine-6-phosphate isomerase family. NagB subfamily.

It carries out the reaction alpha-D-glucosamine 6-phosphate + H2O = beta-D-fructose 6-phosphate + NH4(+). It participates in amino-sugar metabolism; N-acetylneuraminate degradation; D-fructose 6-phosphate from N-acetylneuraminate: step 5/5. Its function is as follows. Catalyzes the reversible isomerization-deamination of glucosamine 6-phosphate (GlcN6P) to form fructose 6-phosphate (Fru6P) and ammonium ion. The protein is Glucosamine-6-phosphate deaminase of Streptococcus pyogenes serotype M18 (strain MGAS8232).